Consider the following 174-residue polypeptide: Ribosome maturation factor RimP (174 aa).

It belongs to the RimP family.

The protein localises to the cytoplasm. Its function is as follows. Required for maturation of 30S ribosomal subunits. The sequence is that of Ribosome maturation factor RimP from Bdellovibrio bacteriovorus (strain ATCC 15356 / DSM 50701 / NCIMB 9529 / HD100).